The sequence spans 323 residues: rRNA 2'-O-methyltransferase fibrillarin (323 aa).

Residues 1–78 (MRPGFSPRGG…GGGRGGFGGG (78 aa)) form a disordered region. Composition is skewed to gly residues over residues 7 to 44 (PRGG…GGRG) and 63 to 78 (GRGG…FGGG). Asymmetric dimethylarginine is present on residues Arg8, Arg17, Arg23, and Arg29. Residues 174-175 (TT), 193-194 (EF), 218-219 (DA), and 238-241 (DVAQ) each bind S-adenosyl-L-methionine. The tract at residues 276–308 (APEAVFAAEVKKMQQENMKPQEQLTLEPYERDH) is helical.

It belongs to the methyltransferase superfamily. Fibrillarin family. As to quaternary structure, component of box C/D small nucleolar ribonucleoprotein (snoRNP) particles. Part of the small subunit (SSU) processome, composed of more than 70 proteins and the RNA chaperone small nucleolar RNA (snoRNA) U3. By homology to other fibrillarins, some or all of the N-terminal domain arginines are modified to asymmetric dimethylarginine (DMA).

It localises to the nucleus. The protein resides in the nucleolus. Its subcellular location is the nucleoplasm. It catalyses the reaction L-glutaminyl-[histone H2A] + S-adenosyl-L-methionine = N(5)-methyl-L-glutaminyl-[histone H2A] + S-adenosyl-L-homocysteine + H(+). The enzyme catalyses a ribonucleotide in rRNA + S-adenosyl-L-methionine = a 2'-O-methylribonucleotide in rRNA + S-adenosyl-L-homocysteine + H(+). The catalysed reaction is a ribonucleotide in U6 snRNA + S-adenosyl-L-methionine = a 2'-O-methylribonucleotide in U6 snRNA + S-adenosyl-L-homocysteine + H(+). S-adenosyl-L-methionine-dependent methyltransferase that has the ability to methylate both RNAs and proteins. Involved in pre-rRNA processing by catalyzing the site-specific 2'-hydroxyl methylation of ribose moieties in pre-ribosomal RNA. Probably catalyzes 2'-O-methylation of U6 snRNAs in box C/D RNP complexes. U6 snRNA 2'-O-methylation is required for mRNA splicing fidelity. Also acts as a protein methyltransferase by mediating methylation of 'Gln-105' of histone H2A (H2AQ104me), a modification that impairs binding of the FACT complex and is specifically present at 35S ribosomal DNA locus. Part of the small subunit (SSU) processome, first precursor of the small eukaryotic ribosomal subunit. During the assembly of the SSU processome in the nucleolus, many ribosome biogenesis factors, an RNA chaperone and ribosomal proteins associate with the nascent pre-rRNA and work in concert to generate RNA folding, modifications, rearrangements and cleavage as well as targeted degradation of pre-ribosomal RNA by the RNA exosome. The polypeptide is rRNA 2'-O-methyltransferase fibrillarin (fbl) (Xenopus laevis (African clawed frog)).